We begin with the raw amino-acid sequence, 447 residues long: Argininosuccinate synthase (447 aa).

ATP is bound by residues 17–25 (AFSGGLDTS) and Ala-43. Tyr-99 serves as a coordination point for L-citrulline. ATP is bound by residues Gly-129 and Thr-131. Thr-131, Asn-135, and Asp-136 together coordinate L-aspartate. Asn-135 provides a ligand contact to L-citrulline. Asp-136 provides a ligand contact to ATP. L-citrulline contacts are provided by Arg-139 and Ser-192. Asp-194 is a binding site for ATP. Thr-201, Glu-203, and Glu-280 together coordinate L-citrulline.

This sequence belongs to the argininosuccinate synthase family. Type 2 subfamily. Homotetramer.

The protein resides in the cytoplasm. It carries out the reaction L-citrulline + L-aspartate + ATP = 2-(N(omega)-L-arginino)succinate + AMP + diphosphate + H(+). It functions in the pathway amino-acid biosynthesis; L-arginine biosynthesis; L-arginine from L-ornithine and carbamoyl phosphate: step 2/3. This Escherichia coli O9:H4 (strain HS) protein is Argininosuccinate synthase.